The primary structure comprises 418 residues: Adenosylhomocysteinase (418 aa).

Positions 53, 125, and 150 each coordinate substrate. Residue 151 to 153 coordinates NAD(+); that stretch reads TTT. Substrate contacts are provided by K180 and D184. NAD(+)-binding positions include N185, 214–219, E237, N272, 293–295, and N340; these read GYGWCG and SGH.

This sequence belongs to the adenosylhomocysteinase family. NAD(+) serves as cofactor.

Its subcellular location is the cytoplasm. The enzyme catalyses S-adenosyl-L-homocysteine + H2O = L-homocysteine + adenosine. Its pathway is amino-acid biosynthesis; L-homocysteine biosynthesis; L-homocysteine from S-adenosyl-L-homocysteine: step 1/1. Functionally, may play a key role in the regulation of the intracellular concentration of adenosylhomocysteine. The protein is Adenosylhomocysteinase of Aquifex aeolicus (strain VF5).